Here is a 227-residue protein sequence, read N- to C-terminus: Glutathione S-transferase U13 (227 aa).

In terms of domain architecture, GST N-terminal spans 5–86 (DTVKLIGSWS…YVDEAWPSVP (82 aa)). Residues 15 to 16 (SP), 43 to 44 (EK), 57 to 58 (KV), and 70 to 71 (ES) contribute to the glutathione site. Residues 92-224 (DAYDRASARF…EVVAFAKQKF (133 aa)) enclose the GST C-terminal domain. The residue at position 158 (threonine 158) is a Phosphothreonine.

The protein belongs to the GST superfamily. Tau family.

The protein localises to the cytoplasm. The protein resides in the cytosol. The enzyme catalyses RX + glutathione = an S-substituted glutathione + a halide anion + H(+). Functionally, in vitro, possesses glutathione S-transferase activity toward 1-chloro-2,4-dinitrobenzene (CDNB) and benzyl isothiocyanate (BITC). May be involved in the conjugation of reduced glutathione to a wide number of exogenous and endogenous hydrophobic electrophiles and have a detoxification role against certain herbicides. This chain is Glutathione S-transferase U13 (GSTU13), found in Arabidopsis thaliana (Mouse-ear cress).